The following is an 82-amino-acid chain: UPF0248 protein Mevan_1298 (82 aa).

It belongs to the UPF0248 family.

The protein is UPF0248 protein Mevan_1298 of Methanococcus vannielii (strain ATCC 35089 / DSM 1224 / JCM 13029 / OCM 148 / SB).